A 397-amino-acid chain; its full sequence is Putative gustatory receptor 85a (397 aa).

Over 1 to 56 (MYSLIEAQLLGGKLVNRVMASLRRIIQRSLGYFCALNGILDFNTDIGTGNLRRYRV) the chain is Cytoplasmic. The helical transmembrane segment at 57–77 (LFMYRLLHNFAVISLTLKFLF) threads the bilayer. Topologically, residues 78–90 (DFTDHFKYIESST) are extracellular. A helical transmembrane segment spans residues 91 to 111 (LITVNFFTYFTLVFFALLSSM). At 112–151 (GSCYQWQNRILAVLKELKHQRDLSRHMGYRVPRSKQNSID) the chain is on the cytoplasmic side. Residues 152–172 (YLLFALTVLLILRLSIHLATF) form a helical membrane-spanning segment. The Extracellular segment spans residues 173–186 (TLSARMGFNHPCNC). A helical transmembrane segment spans residues 187–207 (FLPECMIFSMNYLLFAILAEI). Residues 208–268 (TRCWWSLQSG…RYVTLAYMAR (61 aa)) are Cytoplasmic-facing. Residues 269-289 (NLWSGIVAGYLLVRFVIGNGL) form a helical membrane-spanning segment. The Extracellular portion of the chain corresponds to 290-293 (QDVE). A helical transmembrane segment spans residues 294-314 (LVYLVFSFITCIQPLMLSLLV). Topologically, residues 315–375 (NSMTSTTGSL…FRINRSLAFR (61 aa)) are cytoplasmic. Residues 376 to 396 (SASLILVHVLYMVQSDYISIT) traverse the membrane as a helical segment. Position 397 (Asn-397) is a topological domain, extracellular.

This sequence belongs to the insect chemoreceptor superfamily. Gustatory receptor (GR) family. Gr22e subfamily.

Its subcellular location is the cell membrane. Probable gustatory receptor which mediates acceptance or avoidance behavior, depending on its substrates. In Drosophila melanogaster (Fruit fly), this protein is Putative gustatory receptor 85a (Gr85a).